The primary structure comprises 115 residues: Large ribosomal subunit protein bL19 (115 aa).

The protein belongs to the bacterial ribosomal protein bL19 family.

This protein is located at the 30S-50S ribosomal subunit interface and may play a role in the structure and function of the aminoacyl-tRNA binding site. This Escherichia coli O139:H28 (strain E24377A / ETEC) protein is Large ribosomal subunit protein bL19.